Reading from the N-terminus, the 216-residue chain is GTPase IMAP family member GIMD1 (216 aa).

The 212-residue stretch at 5–216 (KMTINLALFG…ENCYQVLTFK (212 aa)) folds into the AIG1-type G domain. GTP contacts are provided by residues 14–22 (GMTQSGKSS), serine 35, and 147–149 (HAE).

This sequence belongs to the TRAFAC class TrmE-Era-EngA-EngB-Septin-like GTPase superfamily. AIG1/Toc34/Toc159-like paraseptin GTPase family. IAN subfamily.

The protein is GTPase IMAP family member GIMD1 (GIMD1) of Bos taurus (Bovine).